The sequence spans 431 residues: POU domain, class 2, transcription factor 3 (431 aa).

3 disordered regions span residues 1–39 (MVNLEPMHTEIKMSGDVADSTDTRSTFGQVEPGNDRNGL), 130–180 (LLPQ…EPTD), and 248–267 (DAESSPSDPSASTPSSYPTL). Residues 176–250 (DEPTDLEELE…LLEKWLNDAE (75 aa)) form the POU-specific domain. A compositionally biased stretch (low complexity) spans 251–267 (SSPSDPSASTPSSYPTL). A DNA-binding region (homeobox) is located at residues 274–333 (KRKKRTSIETNIRLTLEKRFQDNPKPSSEEISMIAEQLSMEKEVVRVWFCNRRQKEKRIN). 3 stretches are compositionally biased toward low complexity: residues 352–364 (PSGSLGPLSVPPV), 374–390 (SSCSPGNNSRPSSPGSG), and 398–419 (ASQNNSKAAMNSSSSSSFNSSG). The segment at 352–419 (PSGSLGPLSV…SSSSSFNSSG (68 aa)) is disordered.

Belongs to the POU transcription factor family. Class-2 subfamily. As to quaternary structure, interacts (via the POU domain) with POU2AF1 and POU2AF2 in a DNA-dependent manner; this interaction recruits POU2AF2 to chromatin and increases POU2F3 transactivation activity. In terms of tissue distribution, skin, thymus, stomach and testis.

Its subcellular location is the nucleus. In terms of biological role, transcription factor that binds to the octamer motif (5'-ATTTGCAT-3'). Regulates cell type-specific differentiation pathways. Involved in the regulation of keratinocytes differentiation. The POU2F3-POU2AF2/POU2AF3 complex drives the expression of tuft-cell-specific genes, a rare chemosensory cells that coordinate immune and neural functions within mucosal epithelial tissues. The protein is POU domain, class 2, transcription factor 3 (Pou2f3) of Mus musculus (Mouse).